Here is a 439-residue protein sequence, read N- to C-terminus: L-cysteine:1D-myo-inositol 2-amino-2-deoxy-alpha-D-glucopyranoside ligase 2 (439 aa).

Residue Cys-60 coordinates Zn(2+). Residues Cys-60–Thr-63, Thr-75, and Asn-98–Thr-100 contribute to the L-cysteinyl-5'-AMP site. A 'HIGH' region motif is present at residues Ile-62–His-72. The short motif at Glu-203–Pro-208 is the 'ERGGDP' region element. An L-cysteinyl-5'-AMP-binding site is contributed by Trp-243. Cys-247 is a binding site for Zn(2+). Gly-265–Asp-267 serves as a coordination point for L-cysteinyl-5'-AMP. Residue His-272 participates in Zn(2+) binding. Ile-299 is a binding site for L-cysteinyl-5'-AMP. A 'KMSKS' region motif is present at residues Lys-305–Ser-309.

This sequence belongs to the class-I aminoacyl-tRNA synthetase family. MshC subfamily. In terms of assembly, monomer. The cofactor is Zn(2+).

It carries out the reaction 1D-myo-inositol 2-amino-2-deoxy-alpha-D-glucopyranoside + L-cysteine + ATP = 1D-myo-inositol 2-(L-cysteinylamino)-2-deoxy-alpha-D-glucopyranoside + AMP + diphosphate + H(+). Functionally, catalyzes the ATP-dependent condensation of GlcN-Ins and L-cysteine to form L-Cys-GlcN-Ins. The chain is L-cysteine:1D-myo-inositol 2-amino-2-deoxy-alpha-D-glucopyranoside ligase 2 from Corynebacterium urealyticum (strain ATCC 43042 / DSM 7109).